We begin with the raw amino-acid sequence, 397 residues long: Lysophospholipid transporter LplT (397 aa).

At 1–17 (MSESVHTNTSLWSKGMK) the chain is on the periplasmic side. The chain crosses the membrane as a helical span at residues 18 to 38 (AVIVAQFLSAFGDNALLFATL). At 39–52 (ALLKAQFYPEWSQP) the chain is on the cytoplasmic side. A helical transmembrane segment spans residues 53 to 73 (ILQMVFVGAYILFAPFVGQVA). Residues 74-90 (DSFAKGRVMMFANGLKL) are Periplasmic-facing. Residues 91–111 (LGAASICFGINPFLGYTLVGV) traverse the membrane as a helical segment. Residues 112 to 144 (GAAAYSPAKYGILGELTTGSKLVKANGLMEAST) lie on the Cytoplasmic side of the membrane. Residues 145 to 165 (IAAILLGSVAGGVLADWHVLV) form a helical membrane-spanning segment. A topological domain (periplasmic) is located at residue Ala-166. The helical transmembrane segment at 167–187 (LAACALAYGGAVVANIYIPKL) threads the bilayer. At 188-226 (AAARPGQSWNLINMTRSFLNACTSLWRNGETRFSLVGTS) the chain is on the cytoplasmic side. Residues 227 to 247 (LFWGAGVTLRFLLVLWVPVAL) form a helical membrane-spanning segment. Topologically, residues 248-256 (GITDNATPT) are periplasmic. A helical membrane pass occupies residues 257-277 (YLNAMVAIGIVVGAGAAAKLV). The Cytoplasmic segment spans residues 278-280 (TLE). A helical transmembrane segment spans residues 281–301 (TVSRCMPAGILIGVVVLIFSL). Residues 302-304 (QHE) lie on the Periplasmic side of the membrane. A helical transmembrane segment spans residues 305-325 (LLPAYALLMLIGVLGGFFVVP). The Cytoplasmic portion of the chain corresponds to 326–343 (LNALLQERGKKSVGAGNA). Residues 344 to 364 (IAVQNLGENSAMLLMLGIYSL) traverse the membrane as a helical segment. The Periplasmic segment spans residues 365 to 366 (AV). The helical transmembrane segment at 367-387 (MVGIPVVPIGIGFGTLFALAI) threads the bilayer. Residues 388–397 (TALWIWQRRH) are Cytoplasmic-facing.

Belongs to the major facilitator superfamily. LplT (TC 2.A.1.42) family.

The protein localises to the cell inner membrane. Its function is as follows. Catalyzes the facilitated diffusion of 2-acyl-glycero-3-phosphoethanolamine (2-acyl-GPE) into the cell. This Escherichia coli O9:H4 (strain HS) protein is Lysophospholipid transporter LplT.